The sequence spans 846 residues: Auxin response factor 2A (846 aa).

Over residues 1 to 12 (MAASEVSIQGYS) the composition is skewed to polar residues. The interval 1–30 (MAASEVSIQGYSEPSDGSRPVSETGRSSSG) is disordered. Positions 146–248 (FCKTLTASDT…ELRVGVRRAM (103 aa)) form a DNA-binding region, TF-B3. Disordered regions lie at residues 380–423 (PPAL…HSQA) and 660–693 (DMNIGIHPHQSLATDSDQRSEQSKGSKVDDGVAA). 2 stretches are compositionally biased toward polar residues: residues 398–408 (ILPTSPDSSVL) and 414–423 (SRATADHSQA). A compositionally biased stretch (basic and acidic residues) spans 675–693 (SDQRSEQSKGSKVDDGVAA). Residues 720–804 (RSCTKVHKQG…RKIFIYTKEE (85 aa)) enclose the PB1 domain. Polar residues-rich tracts occupy residues 809 to 824 (NPGTLNSKGEDTSSVA) and 836 to 846 (QLPSESGQAES). The disordered stretch occupies residues 809-846 (NPGTLNSKGEDTSSVAEGSDAKEVKNLQLPSESGQAES).

This sequence belongs to the ARF family. Homodimers and heterodimers. Interacts with ASR1. As to expression, expressed in root, leaf and flower. Expressed in flower buds about three days before opening including ovary, petal and sepal with the highest in stamen. Expressed in stem. Expressed in fruit. Expressed in seeds.

Its subcellular location is the nucleus. Functionally, auxin response factors (ARFs) are transcriptional factors that bind specifically to the DNA sequence 5'-TGTCTC-3' found in the auxin-responsive promoter elements (AuxREs). Could act as transcriptional activator or repressor. Involved in the control of fruit ripening process. Regulates expression of a number of ripening regulators, transcription factors, and ethylene biosynthesis and signaling components. May act as a transcriptional repressor of auxin-responsive genes. Regulates vegetative growth, lateral root formation and flower organ senescence, possibly partially by regulating gene expression of auxin and ethylene response factor (ERF) genes. Plays a negative role in axillary shoot meristem formation. The polypeptide is Auxin response factor 2A (Solanum lycopersicum (Tomato)).